The primary structure comprises 533 residues: 2,3-bisphosphoglycerate-independent phosphoglycerate mutase (533 aa).

Mn(2+) contacts are provided by D15 and S65. S65 functions as the Phosphoserine intermediate in the catalytic mechanism. Residues H126, 156–157 (RD), R188, R194, 258–261 (RPDR), and K331 each bind substrate. D398, H402, D439, H440, and H457 together coordinate Mn(2+).

The protein belongs to the BPG-independent phosphoglycerate mutase family. Monomer. Mn(2+) serves as cofactor.

The enzyme catalyses (2R)-2-phosphoglycerate = (2R)-3-phosphoglycerate. The protein operates within carbohydrate degradation; glycolysis; pyruvate from D-glyceraldehyde 3-phosphate: step 3/5. In terms of biological role, catalyzes the interconversion of 2-phosphoglycerate and 3-phosphoglycerate. The protein is 2,3-bisphosphoglycerate-independent phosphoglycerate mutase of Nostoc sp. (strain PCC 7120 / SAG 25.82 / UTEX 2576).